The chain runs to 253 residues: Ubiquinone/menaquinone biosynthesis C-methyltransferase UbiE (253 aa).

S-adenosyl-L-methionine contacts are provided by residues threonine 76, aspartate 97, 125 to 126, and serine 142; that span reads NA.

It belongs to the class I-like SAM-binding methyltransferase superfamily. MenG/UbiE family.

It catalyses the reaction a 2-demethylmenaquinol + S-adenosyl-L-methionine = a menaquinol + S-adenosyl-L-homocysteine + H(+). It carries out the reaction a 2-methoxy-6-(all-trans-polyprenyl)benzene-1,4-diol + S-adenosyl-L-methionine = a 5-methoxy-2-methyl-3-(all-trans-polyprenyl)benzene-1,4-diol + S-adenosyl-L-homocysteine + H(+). It participates in quinol/quinone metabolism; menaquinone biosynthesis; menaquinol from 1,4-dihydroxy-2-naphthoate: step 2/2. Its pathway is cofactor biosynthesis; ubiquinone biosynthesis. In terms of biological role, methyltransferase required for the conversion of demethylmenaquinol (DMKH2) to menaquinol (MKH2) and the conversion of 2-polyprenyl-6-methoxy-1,4-benzoquinol (DDMQH2) to 2-polyprenyl-3-methyl-6-methoxy-1,4-benzoquinol (DMQH2). The sequence is that of Ubiquinone/menaquinone biosynthesis C-methyltransferase UbiE from Xylella fastidiosa (strain M23).